Reading from the N-terminus, the 394-residue chain is Protein TsgA homolog (394 aa).

A run of 12 helical transmembrane segments spans residues 11–31 (WISF…GMVM), 51–71 (FLNA…EIVP), 78–98 (FGFV…SIAL), 101–121 (VSMF…TFLI), 134–154 (LLFT…VAAV), 162–182 (WYWV…LTFG), 206–226 (IGVL…LGFI), 250–270 (FWMS…FFDL), 273–293 (ILTV…NGAP), 297–317 (AWFI…IITL), 332–352 (FVLT…GPIV), and 361–381 (LQTA…LGFV).

Belongs to the major facilitator superfamily. TsgA family.

It is found in the cell inner membrane. This chain is Protein TsgA homolog, found in Enterobacter sp. (strain 638).